Reading from the N-terminus, the 401-residue chain is Subtilisin-like protease 7 (401 aa).

The first 20 residues, 1–20, serve as a signal peptide directing secretion; it reads MGFITKAIPLALAAASVING. A propeptide spanning residues 21–119 is cleaved from the precursor; the sequence is AEILETRAGV…IERDARVQIN (99 aa). Residues 36–118 form the Inhibitor I9 domain; that stretch reads KYIVVMNDGM…YIERDARVQI (83 aa). A glycan (N-linked (GlcNAc...) asparagine) is linked at Asn58. The Peptidase S8 domain occupies 129–401; the sequence is SWGLARVGSR…SKLINNGSGM (273 aa). Active-site charge relay system residues include Asp161 and His193. N-linked (GlcNAc...) asparagine glycosylation is found at Asn223 and Asn253. The Charge relay system role is filled by Ser347. The N-linked (GlcNAc...) asparagine glycan is linked to Asn397.

Belongs to the peptidase S8 family.

Its subcellular location is the secreted. Secreted subtilisin-like serine protease with keratinolytic activity that contributes to pathogenicity. This chain is Subtilisin-like protease 7 (SUB7), found in Trichophyton equinum (Horse ringworm fungus).